An 84-amino-acid chain; its full sequence is Delta-conotoxin-like MVIA (84 aa).

The signal sequence occupies residues 1–22; sequence MKLTCVMIVAVLFLTTWTFVTA. A propeptide spanning residues 23–49 is cleaved from the precursor; the sequence is DDSRYGLKNLFPKARHEMKNPEASKLN. 3 disulfide bridges follow: Cys54-Cys69, Cys61-Cys73, and Cys68-Cys77. Pro65 is subject to 4-hydroxyproline. Serine amide is present on Ser83.

It belongs to the conotoxin O1 superfamily. In terms of tissue distribution, expressed by the venom duct.

The protein resides in the secreted. In terms of biological role, delta-conotoxins bind to site 6 of voltage-gated sodium channels (Nav) and inhibit the inactivation process. In Conus magus (Magical cone), this protein is Delta-conotoxin-like MVIA.